A 593-amino-acid polypeptide reads, in one-letter code: Mitoguardin 2 (593 aa).

A run of 2 helical transmembrane segments spans residues 11 to 31 and 42 to 62; these read MIQA…TTFG and PGLR…ALAA. Disordered stretches follow at residues 101 to 134 and 195 to 228; these read KKGY…HSGS and LSVG…EPES. Residues 107-123 show a composition bias toward polar residues; sequence RRVQSPSSKSNDTLSGI. The segment covering 124-134 has biased composition (low complexity); it reads SSIEPSKHSGS. Position 132 is a phosphoserine (Ser-132). At Thr-206 the chain carries Phosphothreonine. Ser-220, Ser-224, and Ser-228 each carry phosphoserine. Thr-273 carries the post-translational modification Phosphothreonine. Phosphoserine is present on residues Ser-276 and Ser-295. Residues 292–298 carry the FFAT motif; the sequence is SFFSATE. A helical transmembrane segment spans residues 563–583; it reads ILLGYLGVPAASSIGLNGVLP.

The protein belongs to the mitoguardin family. Homodimer and heterodimer; forms heterodimers with MIGA1. Interacts with PLD6/MitoPLD. Interacts (via phosphorylated FFAT motif) with MOSPD2. In terms of processing, phosphorylation at Ser-295 of the FFAT motif activates interaction with MOSPD2.

Its subcellular location is the mitochondrion outer membrane. Its function is as follows. Regulator of mitochondrial fusion: acts by forming homo- and heterodimers at the mitochondrial outer membrane and facilitating the formation of PLD6/MitoPLD dimers. May act by regulating phospholipid metabolism via PLD6/MitoPLD. The polypeptide is Mitoguardin 2 (Bos taurus (Bovine)).